The chain runs to 772 residues: Bromo adjacent homology domain-containing 1 protein (772 aa).

Disordered stretches follow at residues Met-1–Val-63 and Leu-77–Arg-117. Ser-8 is modified (phosphoserine). Residues Thr-49–Ser-61 are compositionally biased toward basic residues. A phosphoserine mark is found at Ser-101 and Ser-121. 3 disordered regions span residues Leu-131–Tyr-357, Gln-521–Gly-582, and Pro-723–Thr-743. Composition is skewed to basic and acidic residues over residues Arg-147–Ala-158, Arg-170–Ser-182, and Glu-189–Pro-199. The residue at position 182 (Ser-182) is a Phosphoserine. Ser-204 carries the post-translational modification Phosphoserine. A compositionally biased stretch (pro residues) spans Ser-280–Gln-289. Residues Leu-299–Leu-310 show a composition bias toward low complexity. Positions Phe-340–Gly-352 are enriched in pro residues. Residues Gly-536–Arg-548 are compositionally biased toward polar residues. The segment covering His-549 to Thr-580 has biased composition (basic residues). The residue at position 580 (Thr-580) is a Phosphothreonine. The 156-residue stretch at Glu-616–Pro-771 folds into the BAH domain.

As to quaternary structure, interacts with CBX5 (HP1 alpha), HDAC5, MBD1 and SP1. Post-translationally, ubiquitinated in a FBXO11-dependent manner; leading to degradation.

Its subcellular location is the nucleus. It is found in the chromosome. In terms of biological role, heterochromatin protein that acts as a transcription repressor and has the ability to promote the formation of large heterochromatic domains. May act by recruiting heterochromatin proteins such as CBX5 (HP1 alpha), HDAC5 and MBD1. Represses IGF2 expression by binding to its CpG-rich P3 promoter and recruiting heterochromatin proteins. The polypeptide is Bromo adjacent homology domain-containing 1 protein (Bahd1) (Mus musculus (Mouse)).